A 386-amino-acid polypeptide reads, in one-letter code: MFRHIRPVWAEIDLDNIAYNMQQIRRCSKSDEIIGVVKADAYGHGAVDVAPVLLENGANRLAVAVISEAVELRKSGIQCPIMILGYTPLSLVDSIIKYSIEQTVFSYDYAEKLSEAARQKNITLRIHIALDTGMGRIGFLPTEESVWEVYKISKLSNIIIEGIFSHFSTSDETNKEYTYAQLKKFEWFYNELRKKNIKINIRHIGNSAAIMELPETHFEATRPGIILYGYYPSNEVDKNKLNLKPIMTLKTNVVHIKKMMPGEYVSYGRKFKCERESIIATLPVGYADGYTRMLSGKAKVIINGNYAPVIGRICMDQCMIDITDLPSVQVGDEVVIMGESDDKKFTADDMAEIIGTINYEVICMISKRVPRVYIKNGEVVKIRNYV.

The active-site Proton acceptor; specific for D-alanine is Lys-38. Lys-38 carries the post-translational modification N6-(pyridoxal phosphate)lysine. Arg-136 provides a ligand contact to substrate. Tyr-267 functions as the Proton acceptor; specific for L-alanine in the catalytic mechanism. Substrate is bound at residue Met-315.

It belongs to the alanine racemase family. Pyridoxal 5'-phosphate is required as a cofactor.

The catalysed reaction is L-alanine = D-alanine. It participates in amino-acid biosynthesis; D-alanine biosynthesis; D-alanine from L-alanine: step 1/1. Catalyzes the interconversion of L-alanine and D-alanine. May also act on other amino acids. This Clostridium acetobutylicum (strain ATCC 824 / DSM 792 / JCM 1419 / IAM 19013 / LMG 5710 / NBRC 13948 / NRRL B-527 / VKM B-1787 / 2291 / W) protein is Alanine racemase 1 (alr1).